A 368-amino-acid chain; its full sequence is 3-isopropylmalate dehydrogenase (368 aa).

79 to 92 (GPRYEGLPWDLRPE) contributes to the NAD(+) binding site. Arg99, Arg109, Arg138, and Asp228 together coordinate substrate. The Mg(2+) site is built by Asp228, Asp252, and Asp256. Residue 292–304 (GSAPDIAGQDRAN) participates in NAD(+) binding.

The protein belongs to the isocitrate and isopropylmalate dehydrogenases family. LeuB type 1 subfamily. As to quaternary structure, homodimer. It depends on Mg(2+) as a cofactor. Mn(2+) serves as cofactor.

The protein resides in the cytoplasm. It catalyses the reaction (2R,3S)-3-isopropylmalate + NAD(+) = 4-methyl-2-oxopentanoate + CO2 + NADH. Its pathway is amino-acid biosynthesis; L-leucine biosynthesis; L-leucine from 3-methyl-2-oxobutanoate: step 3/4. Catalyzes the oxidation of 3-carboxy-2-hydroxy-4-methylpentanoate (3-isopropylmalate) to 3-carboxy-4-methyl-2-oxopentanoate. The product decarboxylates to 4-methyl-2 oxopentanoate. The chain is 3-isopropylmalate dehydrogenase from Symbiobacterium thermophilum (strain DSM 24528 / JCM 14929 / IAM 14863 / T).